A 196-amino-acid polypeptide reads, in one-letter code: MAALNVLVSGCGRFLRGLLTGPTVTSWARPPARGFREVVEIQEGKTTIIEGRITGTPKESPNPPNPSGQCPICRWNLKHKYSYEDVLLLSQFIRPHGGMLPRSITGLCQEEHRKIEECVKMAHRAGLLPNHRPKLPEGFFPKTRPRLNRYLTRWSPRSVKPIYNKGHRWNKVRMAVGSPLLKDNVSYTGRPLVLYH.

The N-terminal 34 residues, 1-34 (MAALNVLVSGCGRFLRGLLTGPTVTSWARPPARG), are a transit peptide targeting the mitochondrion.

The protein belongs to the bacterial ribosomal protein bS18 family. Mitochondrion-specific ribosomal protein mL66 subfamily. As to quaternary structure, component of the mitochondrial ribosome small subunit (28S) which comprises a 12S rRNA and about 30 distinct proteins.

The protein resides in the mitochondrion. This Bos taurus (Bovine) protein is Large ribosomal subunit protein mL66 (MRPS18A).